We begin with the raw amino-acid sequence, 287 residues long: Formamidopyrimidine-DNA glycosylase (287 aa).

Pro-2 (schiff-base intermediate with DNA) is an active-site residue. Glu-3 (proton donor) is an active-site residue. Lys-61 serves as the catalytic Proton donor; for beta-elimination activity. DNA is bound by residues His-95, Arg-115, and Arg-157. The segment at 243–277 adopts an FPG-type zinc-finger fold; that stretch reads NVYGRADQPCRRCGTPVRREAFMNRSSYSCPRCQP. Catalysis depends on Arg-267, which acts as the Proton donor; for delta-elimination activity.

This sequence belongs to the FPG family. As to quaternary structure, monomer. Requires Zn(2+) as cofactor.

It catalyses the reaction Hydrolysis of DNA containing ring-opened 7-methylguanine residues, releasing 2,6-diamino-4-hydroxy-5-(N-methyl)formamidopyrimidine.. The catalysed reaction is 2'-deoxyribonucleotide-(2'-deoxyribose 5'-phosphate)-2'-deoxyribonucleotide-DNA = a 3'-end 2'-deoxyribonucleotide-(2,3-dehydro-2,3-deoxyribose 5'-phosphate)-DNA + a 5'-end 5'-phospho-2'-deoxyribonucleoside-DNA + H(+). Involved in base excision repair of DNA damaged by oxidation or by mutagenic agents. Acts as a DNA glycosylase that recognizes and removes damaged bases. Has a preference for oxidized purines, such as 7,8-dihydro-8-oxoguanine (8-oxoG). Has AP (apurinic/apyrimidinic) lyase activity and introduces nicks in the DNA strand. Cleaves the DNA backbone by beta-delta elimination to generate a single-strand break at the site of the removed base with both 3'- and 5'-phosphates. The chain is Formamidopyrimidine-DNA glycosylase from Salinispora arenicola (strain CNS-205).